Consider the following 745-residue polypeptide: Catalase-peroxidase (745 aa).

The segment at residues 97-223 (WHSAGTYRTG…LAAVQMGLIY (127 aa)) is a cross-link (tryptophyl-tyrosyl-methioninium (Trp-Tyr) (with M-249)). The active-site Proton acceptor is the H98. The segment at residues 223-249 (YVNPEGPDGSPDPWASARDIRMTFARM) is a cross-link (tryptophyl-tyrosyl-methioninium (Tyr-Met) (with W-97)). H264 is a binding site for heme b. A disordered region spans residues 345-368 (KQWQPVNPKPEDLAPGAHSPDRRV).

It belongs to the peroxidase family. Peroxidase/catalase subfamily. In terms of assembly, homodimer or homotetramer. Heme b is required as a cofactor. Post-translationally, formation of the three residue Trp-Tyr-Met cross-link is important for the catalase, but not the peroxidase activity of the enzyme.

The enzyme catalyses H2O2 + AH2 = A + 2 H2O. It carries out the reaction 2 H2O2 = O2 + 2 H2O. Bifunctional enzyme with both catalase and broad-spectrum peroxidase activity. In Phenylobacterium zucineum (strain HLK1), this protein is Catalase-peroxidase.